The following is a 463-amino-acid chain: Glycine--tRNA ligase (463 aa).

2 residues coordinate substrate: Arg-98 and Glu-174. ATP contacts are provided by residues 206 to 208, 216 to 221, 290 to 291, and 334 to 337; these read RNE, FRTREF, EL, and GADR. 221 to 225 contacts substrate; sequence FEQME. 330–334 lines the substrate pocket; it reads EPSLG.

Belongs to the class-II aminoacyl-tRNA synthetase family. Homodimer.

The protein resides in the cytoplasm. The enzyme catalyses tRNA(Gly) + glycine + ATP = glycyl-tRNA(Gly) + AMP + diphosphate. Its function is as follows. Catalyzes the attachment of glycine to tRNA(Gly). This chain is Glycine--tRNA ligase, found in Staphylococcus aureus (strain Mu50 / ATCC 700699).